Here is a 273-residue protein sequence, read N- to C-terminus: Formamidopyrimidine-DNA glycosylase (273 aa).

Pro2 functions as the Schiff-base intermediate with DNA in the catalytic mechanism. Glu3 serves as the catalytic Proton donor. Residue Lys57 is the Proton donor; for beta-elimination activity of the active site. DNA-binding residues include His91, Arg110, and Lys151. The FPG-type zinc finger occupies 236–270; that stretch reads QVYGRKDEACNDCGTIIEAKVIGQRNSYFCPHCQM. Arg260 serves as the catalytic Proton donor; for delta-elimination activity.

This sequence belongs to the FPG family. Monomer. Zn(2+) is required as a cofactor.

It catalyses the reaction Hydrolysis of DNA containing ring-opened 7-methylguanine residues, releasing 2,6-diamino-4-hydroxy-5-(N-methyl)formamidopyrimidine.. The enzyme catalyses 2'-deoxyribonucleotide-(2'-deoxyribose 5'-phosphate)-2'-deoxyribonucleotide-DNA = a 3'-end 2'-deoxyribonucleotide-(2,3-dehydro-2,3-deoxyribose 5'-phosphate)-DNA + a 5'-end 5'-phospho-2'-deoxyribonucleoside-DNA + H(+). Its function is as follows. Involved in base excision repair of DNA damaged by oxidation or by mutagenic agents. Acts as a DNA glycosylase that recognizes and removes damaged bases. Has a preference for oxidized purines, such as 7,8-dihydro-8-oxoguanine (8-oxoG). Has AP (apurinic/apyrimidinic) lyase activity and introduces nicks in the DNA strand. Cleaves the DNA backbone by beta-delta elimination to generate a single-strand break at the site of the removed base with both 3'- and 5'-phosphates. In Actinobacillus pleuropneumoniae serotype 3 (strain JL03), this protein is Formamidopyrimidine-DNA glycosylase.